The sequence spans 126 residues: 13 kDa ribonucleoprotein-associated protein (126 aa).

The protein belongs to the eukaryotic ribosomal protein eL8 family. In terms of assembly, component of the U3 snoRNP particle. Binds to the C'/D and B/C motifs in U3 snoRNA. Component of the 25S U4/U6.U5 tri-snRNP particle, a subcomplex of the spliceosome. Binds to the 5' stem-loop of U4 snRNA.

Its subcellular location is the nucleus. The protein localises to the nucleolus. In terms of biological role, common component of the spliceosome and rRNA processing machinery. In association with the spliceosomal U4/U6.U5 tri-snRNP particle, required for splicing of pre-mRNA. In association with box C/D snoRNPs, required for processing of pre-ribosomal RNA (rRNA) and site-specific 2'-O-methylation of substrate RNAs. Essential for the accumulation and stability of U4 snRNA, U6 snRNA, and box C/D snoRNAs. This Candida albicans (strain SC5314 / ATCC MYA-2876) (Yeast) protein is 13 kDa ribonucleoprotein-associated protein (SNU13).